Here is a 328-residue protein sequence, read N- to C-terminus: MSTQGFLKPRSIEVEPVGPNHAKIVMEPFERGYGHTLGNALRRILLSSMTGYAPTEVQMTGVVHEYSTIPGVREDVVDILLNLKGVVFKLHNRDEVTLILRKNGSGLVLASDIELPHDVEIVNPEHPICNLTDAGKLEMQIKVEKGRGYVPGNVRALSEDRTHTIGRIILDASFSPVRRVSYAVESARVEQRTDLDKLVLDIETNGVISPEEAVRQSARILMDQISVFAALEGAGDSYEAPVRGTPQIDPVLLRPVDDLELTVRSANCLKAENIYYIGDLIQRTENELLKTPNLGRKSLNEIKEVLAARGLTLGMKLENWPPLGLERP.

The segment at 1–232 is alpha N-terminal domain (alpha-NTD); sequence MSTQGFLKPR…DQISVFAALE (232 aa). The tract at residues 248–328 is alpha C-terminal domain (alpha-CTD); the sequence is IDPVLLRPVD…NWPPLGLERP (81 aa).

This sequence belongs to the RNA polymerase alpha chain family. In terms of assembly, homodimer. The RNAP catalytic core consists of 2 alpha, 1 beta, 1 beta' and 1 omega subunit. When a sigma factor is associated with the core the holoenzyme is formed, which can initiate transcription.

It catalyses the reaction RNA(n) + a ribonucleoside 5'-triphosphate = RNA(n+1) + diphosphate. Its function is as follows. DNA-dependent RNA polymerase catalyzes the transcription of DNA into RNA using the four ribonucleoside triphosphates as substrates. This is DNA-directed RNA polymerase subunit alpha from Bordetella avium (strain 197N).